Consider the following 69-residue polypeptide: Large ribosomal subunit protein uL29 (69 aa).

It belongs to the universal ribosomal protein uL29 family.

In Staphylococcus haemolyticus (strain JCSC1435), this protein is Large ribosomal subunit protein uL29.